Consider the following 517-residue polypeptide: Crotonobetaine/carnitine--CoA ligase (517 aa).

It belongs to the ATP-dependent AMP-binding enzyme family.

The enzyme catalyses 4-(trimethylamino)butanoate + ATP + CoA = 4-(trimethylamino)butanoyl-CoA + AMP + diphosphate. It carries out the reaction crotonobetaine + ATP + CoA = crotonobetainyl-CoA + AMP + diphosphate. It catalyses the reaction (R)-carnitine + ATP + CoA = (R)-carnitinyl-CoA + AMP + diphosphate. The protein operates within amine and polyamine metabolism; carnitine metabolism. Catalyzes the transfer of CoA to carnitine, generating the initial carnitinyl-CoA needed for the CaiB reaction cycle. Also has activity toward crotonobetaine and gamma-butyrobetaine. This Escherichia coli (strain K12 / MC4100 / BW2952) protein is Crotonobetaine/carnitine--CoA ligase.